The following is a 291-amino-acid chain: MDKIIKSISTSGSFRAYVLDCTETVRTAQEKHQTLSSSTVALGRTLIANQILAANQKGNSKVTVKVIGDSSFGHIISVADTKGNVKGYIQNTGVDIKKTATGEVLVGPFMGNGHFVVITDYATGQPYTSTTPLITGEIGEDFAYYLTESEQTPSAVGLNVLLDDEDKVKVAGGFMLQVLPGASDEEISRYEKRIQEMPSISSLLESENHIESLLSAIYGEDDYKRLSEDSLAFYCDCSKERFEAALLTLGTKELQAMKDEDKGVEITCQFCNQTYYFTEEDLEKIINDSIK.

Cystine bridges form between Cys-235/Cys-237 and Cys-268/Cys-271.

It belongs to the HSP33 family. In terms of processing, under oxidizing conditions two disulfide bonds are formed involving the reactive cysteines. Under reducing conditions zinc is bound to the reactive cysteines and the protein is inactive.

It localises to the cytoplasm. Redox regulated molecular chaperone. Protects both thermally unfolding and oxidatively damaged proteins from irreversible aggregation. Plays an important role in the bacterial defense system toward oxidative stress. This is 33 kDa chaperonin from Streptococcus agalactiae serotype III (strain NEM316).